Consider the following 549-residue polypeptide: Oxygen-dependent choline dehydrogenase (549 aa).

An FAD-binding site is contributed by 4 to 33 (DFVIIGSGSAGSAMASRLSEDGKHTVIVLE). H465 serves as the catalytic Proton acceptor.

The protein belongs to the GMC oxidoreductase family. The cofactor is FAD.

It carries out the reaction choline + A = betaine aldehyde + AH2. The enzyme catalyses betaine aldehyde + NAD(+) + H2O = glycine betaine + NADH + 2 H(+). Its pathway is amine and polyamine biosynthesis; betaine biosynthesis via choline pathway; betaine aldehyde from choline (cytochrome c reductase route): step 1/1. In terms of biological role, involved in the biosynthesis of the osmoprotectant glycine betaine. Catalyzes the oxidation of choline to betaine aldehyde and betaine aldehyde to glycine betaine at the same rate. This Rhizobium rhizogenes (strain K84 / ATCC BAA-868) (Agrobacterium radiobacter) protein is Oxygen-dependent choline dehydrogenase.